The primary structure comprises 217 residues: Phosphatidylserine decarboxylase proenzyme (217 aa).

The active-site Schiff-base intermediate with substrate; via pyruvic acid is the Ser-182. A Pyruvic acid (Ser); by autocatalysis modification is found at Ser-182.

Belongs to the phosphatidylserine decarboxylase family. PSD-A subfamily. In terms of assembly, heterodimer of a large membrane-associated beta subunit and a small pyruvoyl-containing alpha subunit. Pyruvate serves as cofactor. In terms of processing, is synthesized initially as an inactive proenzyme. Formation of the active enzyme involves a self-maturation process in which the active site pyruvoyl group is generated from an internal serine residue via an autocatalytic post-translational modification. Two non-identical subunits are generated from the proenzyme in this reaction, and the pyruvate is formed at the N-terminus of the alpha chain, which is derived from the carboxyl end of the proenzyme. The post-translation cleavage follows an unusual pathway, termed non-hydrolytic serinolysis, in which the side chain hydroxyl group of the serine supplies its oxygen atom to form the C-terminus of the beta chain, while the remainder of the serine residue undergoes an oxidative deamination to produce ammonia and the pyruvoyl prosthetic group on the alpha chain.

It is found in the cell membrane. The catalysed reaction is a 1,2-diacyl-sn-glycero-3-phospho-L-serine + H(+) = a 1,2-diacyl-sn-glycero-3-phosphoethanolamine + CO2. It participates in phospholipid metabolism; phosphatidylethanolamine biosynthesis; phosphatidylethanolamine from CDP-diacylglycerol: step 2/2. Functionally, catalyzes the formation of phosphatidylethanolamine (PtdEtn) from phosphatidylserine (PtdSer). The sequence is that of Phosphatidylserine decarboxylase proenzyme from Nitratidesulfovibrio vulgaris (strain ATCC 29579 / DSM 644 / CCUG 34227 / NCIMB 8303 / VKM B-1760 / Hildenborough) (Desulfovibrio vulgaris).